The primary structure comprises 394 residues: Junctional adhesion molecule-like (394 aa).

The N-terminal stretch at 1-19 (MFCPLKLILLPVLLDYSLG) is a signal peptide. Ig-like V-type domains lie at 20-132 (LNDL…KAVV) and 137-250 (PEEP…IVLH). Residues 20–275 (LNDLNVSPPE…RPLVLGGNQL (256 aa)) are Extracellular-facing. Cystine bridges form between cysteine 42/cysteine 116 and cysteine 155/cysteine 234. Residues asparagine 76 and asparagine 231 are each glycosylated (N-linked (GlcNAc...) asparagine). Residues 276-296 (VIIVGIVCATILLLPVLILIV) traverse the membrane as a helical segment. Topologically, residues 297–394 (KKTCGNKSSV…GGMPKTQQAF (98 aa)) are cytoplasmic. The segment at 369-394 (PSLRSDRNNSLEKKSGGGMPKTQQAF) is disordered. The segment covering 372 to 383 (RSDRNNSLEKKS) has biased composition (basic and acidic residues).

This sequence belongs to the immunoglobulin superfamily. In terms of assembly, homodimer; active form in leukocyte-endothelial cell adhesion. Interacts (homodimeric form) with CXADR. Interacts (via cytoplasmic domain) with the PI3 kinase; upon CXADR-binding. Interacts with ITGA4 and ITGB1; integrin alpha-4/beta-1 may regulate leukocyte to endothelial cells adhesion by controlling JAML homodimerization. As to expression, expression is restricted to the hematopoietic tissues with the exception of liver. Expressed in fetal liver, spleen and thymus. Preferentially expressed by mature leukocytes (at protein level).

The protein resides in the cell membrane. It localises to the cell junction. In terms of biological role, transmembrane protein of the plasma membrane of leukocytes that control their migration and activation through interaction with CXADR, a plasma membrane receptor found on adjacent epithelial and endothelial cells. The interaction between both receptors mediates the activation of gamma-delta T-cells, a subpopulation of T-cells residing in epithelia and involved in tissue homeostasis and repair. Upon epithelial CXADR-binding, JAML induces downstream cell signaling events in gamma-delta T-cells through PI3-kinase and MAP kinases. It results in proliferation and production of cytokines and growth factors by T-cells that in turn stimulate epithelial tissues repair. It also controls the transmigration of leukocytes within epithelial and endothelial tissues through adhesive interactions with epithelial and endothelial CXADR. This Homo sapiens (Human) protein is Junctional adhesion molecule-like.